Reading from the N-terminus, the 881-residue chain is MQDKYSPADVEKSAHDHWQATDAYKAVEHAKDKNGKDKKKFYACSMLPYPSGKLHMGHVRNYTINDVMYRYLRMNGYNVLMPMGWDAFGMPAENAAMANNVPPAQWTYANIEHMKTQMASMGLAIDWSREMTACKPEYYKWNQWMFLKMLEKGIIYKKTGSVNWDPIDQTVLANEQVIDGRGWRSGALIEKREIPMYYARITDYAEELLDHVEHKLPGWPERVRTMQANWIGKSTGVRFAFTHDIKDDDKLINDGKLWVFTTRADTIKGVTFCAVAAEHPLATFAAKSNPELAEFIAECKLGSVIEADMATMEKKGMPTGLFVKHPLTGSLVEVWVGNYVLITYGDGAVMGVPAHDERDFAFAQKYVLPIHQVIDVEGKTFSEVTWHDWYADKENGRCINSGKYDGLNYQQAVNTIAADLEELGLGEKKITYRLRDWGISRQRYWGTPIPMINCADCGAVPVPEKDLPVVLPEDCVPDGSGNPLNKHEAFLKCDCPKCGKPARRETDTMDTFVDSSWYYMRYCSPNSNDAMVDSRNDYWMPMDQYIGGIEHAVLHLLYARFWTKVMRDFGLVKFDEPFTNLLTQGMVLNETYYREDASGKKTWFNPADVQLELDDKGRPVSAILNNDRQPVEIGGTEKMSKSKNNGIDPQAQIDQYGADTARLFTMFASPPEQTLEWSGAGVEGANRFLRRVWTYAYNQSARIAAATASDFSKLSDAQKTLRREVHKILQQADNDYKRIQYNTVVSAGMKMLNTLEGAKLDESAASNAVIAEGLSIFLRILNPVAPHITHVLWQELGFAKVHGDILDAAWPQVDAGALEQAEIEMMIQVNGKLRGSIVVAKDADKATIEATALANEAVRKFIEGTPKKIIVVPGKLVNIVA.

Positions 48 to 58 (PYPSGKLHMGH) match the 'HIGH' region motif. A 'KMSKS' region motif is present at residues 638–642 (KMSKS). Lys641 contacts ATP.

It belongs to the class-I aminoacyl-tRNA synthetase family.

It is found in the cytoplasm. It carries out the reaction tRNA(Leu) + L-leucine + ATP = L-leucyl-tRNA(Leu) + AMP + diphosphate. This chain is Leucine--tRNA ligase, found in Herminiimonas arsenicoxydans.